A 37-amino-acid polypeptide reads, in one-letter code: Gene product 16.5 (37 aa).

This sequence belongs to the phi29likevirus gp16.5 family.

This Bacillus phage phi15 (Bacteriophage phi-15) protein is Gene product 16.5 (16.5).